We begin with the raw amino-acid sequence, 277 residues long: Carbonyl reductase [NADPH] 3 (277 aa).

An N-acetylserine modification is found at S2. Residues 10-34 (VTGA…GDVV), 38-42 (RDVAR), 63-64 (DI), and N90 contribute to the NADP(+) site. S30 is modified (phosphoserine). Residue S140 coordinates substrate. Y194 serves as the catalytic Proton acceptor. Residues 194–198 (YGVSK) and D239 each bind NADP(+).

The protein belongs to the short-chain dehydrogenases/reductases (SDR) family. As to expression, detected in ovary, pancreas, intestine, colon, kidney, brain, thymus, lung, heart, liver, spleen, leukocyte, prostate and testis.

Its subcellular location is the cytoplasm. It carries out the reaction a secondary alcohol + NADP(+) = a ketone + NADPH + H(+). It catalyses the reaction a quinone + NADPH + H(+) = a quinol + NADP(+). Its function is as follows. Catalyzes the NADPH-dependent reduction of carbonyl compounds to their corresponding alcohols. Has low NADPH-dependent oxidoreductase activity. Acts on several orthoquinones, acts as well on non-quinone compounds, such as isatin or on the anticancer drug oracin. Best substrates for CBR3 is 1,2- naphthoquinone, hence could play a role in protection against cytotoxicity of exogenous quinones. Exerts activity toward ortho-quinones but not paraquinones. No endogenous substrate for CBR3 except isatin has been identified. The polypeptide is Carbonyl reductase [NADPH] 3 (Homo sapiens (Human)).